A 146-amino-acid polypeptide reads, in one-letter code: Large ribosomal subunit protein uL15 (146 aa).

The disordered stretch occupies residues Met-1–Met-54.

This sequence belongs to the universal ribosomal protein uL15 family. In terms of assembly, part of the 50S ribosomal subunit.

Functionally, binds to the 23S rRNA. This chain is Large ribosomal subunit protein uL15, found in Mycobacterium ulcerans (strain Agy99).